A 385-amino-acid polypeptide reads, in one-letter code: tRNA N6-adenosine threonylcarbamoyltransferase (385 aa).

Residues His140, His144, and Tyr161 each contribute to the a divalent metal cation site. Substrate is bound by residues 161 to 165 (YVSGG), Asp193, Gly208, Glu212, and Asn314. Asp343 contacts a divalent metal cation.

This sequence belongs to the KAE1 / TsaD family. Component of the EKC/KEOPS complex composed of at least BUD32, CGI121, GON7, KAE1 and PCC1; the whole complex dimerizes. Requires a divalent metal cation as cofactor.

Its subcellular location is the cytoplasm. The protein resides in the nucleus. The catalysed reaction is L-threonylcarbamoyladenylate + adenosine(37) in tRNA = N(6)-L-threonylcarbamoyladenosine(37) in tRNA + AMP + H(+). Component of the EKC/KEOPS complex that is required for the formation of a threonylcarbamoyl group on adenosine at position 37 (t(6)A37) in tRNAs that read codons beginning with adenine. The complex is probably involved in the transfer of the threonylcarbamoyl moiety of threonylcarbamoyl-AMP (TC-AMP) to the N6 group of A37. KAE1 likely plays a direct catalytic role in this reaction, but requires other protein(s) of the complex to fulfill this activity. The EKC/KEOPS complex also promotes both telomere uncapping and telomere elongation. The complex is required for efficient recruitment of transcriptional coactivators. This is tRNA N6-adenosine threonylcarbamoyltransferase from Eremothecium gossypii (strain ATCC 10895 / CBS 109.51 / FGSC 9923 / NRRL Y-1056) (Yeast).